A 248-amino-acid chain; its full sequence is DNA polymerase sliding clamp (248 aa).

Belongs to the PCNA family. In terms of assembly, homotrimer. The subunits circularize to form a toroid; DNA passes through its center. Replication factor C (RFC) is required to load the toroid on the DNA.

Functionally, sliding clamp subunit that acts as a moving platform for DNA processing. Responsible for tethering the catalytic subunit of DNA polymerase and other proteins to DNA during high-speed replication. The sequence is that of DNA polymerase sliding clamp from Nitrosopumilus maritimus (strain SCM1).